We begin with the raw amino-acid sequence, 295 residues long: MAITAQMVKELREKTGAGMMDCKKALTETNGDMEKAIDFLREKGIAKAAKKADRIAAEGLTFIETNGNDGLILELNSETDFVAKNEGFQTLIKELAAHLLAKKPANVEEAMAQTMENGKKVEEHINEAIAKIGEKLTLRRFEIVSKTDADAFGAYLHMGGRIGVLTVLEGSTDEAAAKDVAMHIAAVNPKYIDRDAVTAEEVEHERQVLTQQALNEGKPEKIVAKMVEGRLGKFFEEICLLDQAFVKNPDMKVRQFVESKGATLKGFVRYAVGEGIEKREDNFAEEVMNQVKGSN.

The involved in Mg(2+) ion dislocation from EF-Tu stretch occupies residues 79–82 (TDFV).

This sequence belongs to the EF-Ts family.

The protein localises to the cytoplasm. Associates with the EF-Tu.GDP complex and induces the exchange of GDP to GTP. It remains bound to the aminoacyl-tRNA.EF-Tu.GTP complex up to the GTP hydrolysis stage on the ribosome. The chain is Elongation factor Ts from Bacillus cereus (strain ATCC 10987 / NRS 248).